The following is a 111-amino-acid chain: Small ribosomal subunit protein bS6 (111 aa).

The protein belongs to the bacterial ribosomal protein bS6 family.

Functionally, binds together with bS18 to 16S ribosomal RNA. This chain is Small ribosomal subunit protein bS6, found in Francisella tularensis subsp. tularensis (strain FSC 198).